The primary structure comprises 359 residues: 3-dehydroquinate synthase (359 aa).

NAD(+)-binding positions include 71-76 (DGEQFK), 105-109 (GVIGD), 129-130 (TT), lysine 142, lysine 151, and 169-172 (CLQT). The Zn(2+) site is built by glutamate 184, histidine 247, and histidine 264.

The protein belongs to the sugar phosphate cyclases superfamily. Dehydroquinate synthase family. It depends on Co(2+) as a cofactor. Requires Zn(2+) as cofactor. The cofactor is NAD(+).

The protein resides in the cytoplasm. The enzyme catalyses 7-phospho-2-dehydro-3-deoxy-D-arabino-heptonate = 3-dehydroquinate + phosphate. It participates in metabolic intermediate biosynthesis; chorismate biosynthesis; chorismate from D-erythrose 4-phosphate and phosphoenolpyruvate: step 2/7. Its function is as follows. Catalyzes the conversion of 3-deoxy-D-arabino-heptulosonate 7-phosphate (DAHP) to dehydroquinate (DHQ). This Shewanella sp. (strain ANA-3) protein is 3-dehydroquinate synthase.